Consider the following 128-residue polypeptide: Ribonuclease P protein component (128 aa).

This sequence belongs to the RnpA family. As to quaternary structure, consists of a catalytic RNA component (M1 or rnpB) and a protein subunit.

The catalysed reaction is Endonucleolytic cleavage of RNA, removing 5'-extranucleotides from tRNA precursor.. Its function is as follows. RNaseP catalyzes the removal of the 5'-leader sequence from pre-tRNA to produce the mature 5'-terminus. It can also cleave other RNA substrates such as 4.5S RNA. The protein component plays an auxiliary but essential role in vivo by binding to the 5'-leader sequence and broadening the substrate specificity of the ribozyme. The sequence is that of Ribonuclease P protein component from Prochlorococcus marinus (strain MIT 9301).